The primary structure comprises 147 residues: MLMPKRVKHRKVQRGRMKGKATRGNFIAYGDFAIQATECAWITSNQIEAARIAINRYVKRGGKLWIKIFPDKPVTQKPAETRMGSGKGSPEYWVAVVKPGRVLFEMSDVTEEQAREAFRLASHKLPIKTKFVTRKDFEEMGGEANEG.

It belongs to the universal ribosomal protein uL16 family. Part of the 50S ribosomal subunit.

Binds 23S rRNA and is also seen to make contacts with the A and possibly P site tRNAs. The sequence is that of Large ribosomal subunit protein uL16 from Clostridium acetobutylicum (strain ATCC 824 / DSM 792 / JCM 1419 / IAM 19013 / LMG 5710 / NBRC 13948 / NRRL B-527 / VKM B-1787 / 2291 / W).